We begin with the raw amino-acid sequence, 497 residues long: Zinc finger protein ZIC 2-B (497 aa).

2 disordered regions span residues 58-107 (HMGA…TSQA) and 143-180 (SAAAGGGQHGLFGPPAGSLHHHPHHHHQLSHGEHPQGH). Positions 66–88 (PGGGSGGGSGGGGGAGPNGGAGA) are enriched in gly residues. Over residues 97-107 (PGQTSAFTSQA) the composition is skewed to polar residues. Basic residues predominate over residues 161–171 (LHHHPHHHHQL). Residues 273–308 (LICKWIDPEQLNNPKKSCNKTFSTMHELVTHMSVEH) form a C2H2-type 1; atypical zinc finger. A C2H2-type 2; atypical zinc finger spans residues 317–344 (HICFWEECAREGKPFKAKYKLVNHIRVH). C2H2-type zinc fingers lie at residues 350-374 (FPCPFPGCGKVFARSENLKIHKRTH), 380-404 (FQCEFEGCDRRFANSSDRKKHMHVH), and 410-432 (YLCKMCDKSYTHPSSLRKHMKVH). A disordered region spans residues 423-473 (SSLRKHMKVHESSPQGSESSPAASSGYESSTPPGLVSPNSETQNPNLSPAA). Residues 434–452 (SSPQGSESSPAASSGYESS) are compositionally biased toward low complexity. The segment covering 459–469 (SPNSETQNPNL) has biased composition (polar residues).

The protein belongs to the GLI C2H2-type zinc-finger protein family.

Its subcellular location is the nucleus. The protein localises to the cytoplasm. Functionally, transcriptional repressor that inhibits neurogenesis and induces neural and neural crest differentiation. Regulates anteroposterior patterning in early development by inhibiting expression of the nodal genes through the inhibition of vegt. Required for gastrulation movements and for proper anterior neural and axial development. May also act as a transcriptional activator. May bind to the minimal GLI-consensus sequence 5'-TGGGTGGTC-3'. In Xenopus laevis (African clawed frog), this protein is Zinc finger protein ZIC 2-B (zic2-b).